Reading from the N-terminus, the 31-residue chain is Cytochrome b6-f complex subunit 8 (31 aa).

A helical membrane pass occupies residues 5-25; it reads IVSLAWAALMVVFTFSLSLVV.

This sequence belongs to the PetN family. The 4 large subunits of the cytochrome b6-f complex are cytochrome b6, subunit IV (17 kDa polypeptide, PetD), cytochrome f and the Rieske protein, while the 4 small subunits are PetG, PetL, PetM and PetN. The complex functions as a dimer.

Its subcellular location is the plastid. The protein localises to the chloroplast thylakoid membrane. Component of the cytochrome b6-f complex, which mediates electron transfer between photosystem II (PSII) and photosystem I (PSI), cyclic electron flow around PSI, and state transitions. This is Cytochrome b6-f complex subunit 8 from Acorus calamus (Sweet flag).